Consider the following 432-residue polypeptide: Adenosylhomocysteinase (432 aa).

Position 2 is an N-acetylserine (S2). Substrate is bound by residues T57, D131, and E156. S183 carries the phosphoserine modification. Residues 183-350 (SVTKSKFDNL…EGRLVNLGCA (168 aa)) are NAD binding. Substrate-binding residues include K186 and D190. An N6-(2-hydroxyisobutyryl)lysine modification is found at K186. A Phosphotyrosine modification is found at Y193.

This sequence belongs to the adenosylhomocysteinase family. As to quaternary structure, homotetramer. Interaction with AHCYL1. It depends on NAD(+) as a cofactor.

Its subcellular location is the cytoplasm. The protein localises to the melanosome. It is found in the nucleus. The protein resides in the endoplasmic reticulum. The enzyme catalyses S-adenosyl-L-homocysteine + H2O = L-homocysteine + adenosine. Its pathway is amino-acid biosynthesis; L-homocysteine biosynthesis; L-homocysteine from S-adenosyl-L-homocysteine: step 1/1. Its function is as follows. Catalyzes the hydrolysis of S-adenosyl-L-homocysteine to form adenosine and homocysteine. Binds copper ions. The sequence is that of Adenosylhomocysteinase (AHCY) from Macaca fascicularis (Crab-eating macaque).